Reading from the N-terminus, the 518-residue chain is MTILPKKKPPPPSDPEGNGERSGSGGADSHSRSGARPRSSPPPRWAYPGNPAPPERHPAGTPRPQQASPPPCSGGSGGAGSGPLGEGALGPCCCCTGAGGCCSGPGHSKRRRQGVSAGPGAPGSSPDREDGAGNNSEDEYETAARTQAIDPDTAEQQEHWFEKALQEKKGFIIKQMKEDGACLFRAVADQVYGDQDMHEVVRKHCMDYLMKNADYFSNYVTEDFTTYINRKRKNNCHGNHIEMQAMAEMYNRPVEVYQYGTEPINTFHGIQQNEDEPIRVSYHRNIHYNSVVNPNKATIGVGLGLPSFKPGFAEQSLMKSAIRTSEESWIEQQMLEDKKRATDWEATNEAIEEQVARESYLQWLRDQEKQARQPRKASATCSSATAAASSGLEEWSGRSPRQRSTAGSPEHPDLHAELCMKPPSPAATLMLGKPPSPCAPGPSNQTCAGADRATSPLVSLYPALECRAIMQHMSPTAFGLKDWDDDEILASVLAVSQQEYLDTIKKSTLRRDSSPDHS.

Disordered stretches follow at residues 1 to 79 and 105 to 144; these read MTIL…SGGA and PGHS…ETAA. A compositionally biased stretch (pro residues) spans 39 to 53; it reads SSPPPRWAYPGNPAP. Positions 116–125 are enriched in low complexity; sequence SAGPGAPGSS. Positions 171-294 constitute an OTU domain; that stretch reads FIIKQMKEDG…NIHYNSVVNP (124 aa). Residues 176–182 are cys-loop; it reads MKEDGAC. Residue aspartate 179 is part of the active site. The active-site Nucleophile is the cysteine 182. Residues 231–241 form a variable-loop region; that stretch reads KRKNNCHGNHI. A his-loop region spans residues 282 to 287; sequence YHRNIH. Histidine 287 is a catalytic residue. The segment at 371 to 450 is disordered; that stretch reads ARQPRKASAT…GPSNQTCAGA (80 aa). Residues 377–390 show a composition bias toward low complexity; it reads ASATCSSATAAASS.

It belongs to the peptidase C85 family.

The catalysed reaction is Thiol-dependent hydrolysis of ester, thioester, amide, peptide and isopeptide bonds formed by the C-terminal Gly of ubiquitin (a 76-residue protein attached to proteins as an intracellular targeting signal).. In terms of biological role, deubiquitinating enzyme that may function as negative regulator of the innate immune system. Has peptidase activity towards 'Lys-48'- and 'Lys-63'-linked polyubiquitin chains. Can also cleave 'Lys-11'-linked ubiquitin chains (in vitro). The protein is OTU domain-containing protein 5 (otud5) of Xenopus tropicalis (Western clawed frog).